The primary structure comprises 132 residues: Translation initiation factor 5A (132 aa).

Hypusine is present on lysine 36.

This sequence belongs to the eIF-5A family.

The protein localises to the cytoplasm. Functionally, functions by promoting the formation of the first peptide bond. This Methanosphaera stadtmanae (strain ATCC 43021 / DSM 3091 / JCM 11832 / MCB-3) protein is Translation initiation factor 5A.